The sequence spans 605 residues: Capsid scaffolding protein (605 aa).

Residues H52, S120, and H139 each act as charge relay system in the active site. Residues 326 to 344 (GEFVLIPTAYYSQLLTGQT) are interaction with pAP. The interval 585–605 (IQGSTADDADMFANQMMVGRC) is interaction with major capsid protein.

Belongs to the herpesviridae capsid scaffolding protein family. As to quaternary structure, homomultimer. Interacts with major capsid protein. Exists in a monomer-dimer equilibrium with the dimer being the active species. Post-translationally, capsid scaffolding protein is cleaved by assemblin after formation of the spherical procapsid. As a result, the capsid obtains its mature, icosahedral shape. Cleavages occur at two or more sites: release (R-site) and maturation (M-site).

The protein resides in the host cytoplasm. The protein localises to the host nucleus. The catalysed reaction is Cleaves -Ala-|-Ser- and -Ala-|-Ala- bonds in the scaffold protein.. Acts as a scaffold protein by binding major capsid protein in the cytoplasm, inducing the nuclear localization of both proteins. Multimerizes in the nucleus such as major capsid protein forms the icosahedral T=16 capsid. Autocatalytic cleavage releases the assembly protein, and subsequently abolishes interaction with major capsid protein. Cleavages products are evicted from the capsid before or during DNA packaging. In terms of biological role, protease that plays an essential role in virion assembly within the nucleus. Catalyzes the cleavage of the assembly protein after formation of the spherical procapsid. By that cleavage, the capsid matures and gains its icosahedral shape. The cleavage sites seem to include -Ala-Ser-, -Ala-Ala-, as well as Ala-Thr bonds. Assemblin and cleavages products are evicted from the capsid before or during DNA packaging. Its function is as follows. Plays a major role in capsid assembly. Acts as a scaffold protein by binding major capsid protein. Multimerizes in the nucleus such as major capsid protein forms the icosahedral T=16 capsid. Cleaved by assemblin after capsid completion. The cleavages products are evicted from the capsid before or during DNA packaging. This Varicella-zoster virus (strain Dumas) (HHV-3) protein is Capsid scaffolding protein (33).